Consider the following 307-residue polypeptide: tRNA dimethylallyltransferase (307 aa).

9-16 (GPTAVGKT) contributes to the ATP binding site. 11 to 16 (TAVGKT) contacts substrate. Positions 34–37 (DSMQ) are interaction with substrate tRNA.

The protein belongs to the IPP transferase family. Monomer. Mg(2+) is required as a cofactor.

The catalysed reaction is adenosine(37) in tRNA + dimethylallyl diphosphate = N(6)-dimethylallyladenosine(37) in tRNA + diphosphate. Catalyzes the transfer of a dimethylallyl group onto the adenine at position 37 in tRNAs that read codons beginning with uridine, leading to the formation of N6-(dimethylallyl)adenosine (i(6)A). The sequence is that of tRNA dimethylallyltransferase from Limosilactobacillus fermentum (strain NBRC 3956 / LMG 18251) (Lactobacillus fermentum).